The chain runs to 851 residues: Leucine--tRNA ligase (851 aa).

The 'HIGH' region signature appears at 51 to 61 (PYPSGDLHMGH). A 'KMSKS' region motif is present at residues 615–619 (KMSKS). An ATP-binding site is contributed by lysine 618.

The protein belongs to the class-I aminoacyl-tRNA synthetase family.

The protein resides in the cytoplasm. The catalysed reaction is tRNA(Leu) + L-leucine + ATP = L-leucyl-tRNA(Leu) + AMP + diphosphate. The chain is Leucine--tRNA ligase from Clavibacter michiganensis subsp. michiganensis (strain NCPPB 382).